The primary structure comprises 306 residues: Acetyl-coenzyme A carboxylase carboxyl transferase subunit beta (306 aa).

Positions 25-294 (LWIKDPTSGE…VVNPSNTSST (270 aa)) constitute a CoA carboxyltransferase N-terminal domain. Positions 287–296 (NPSNTSSTNS) are enriched in low complexity. The tract at residues 287-306 (NPSNTSSTNSQASLSKAEAA) is disordered.

Belongs to the AccD/PCCB family. As to quaternary structure, acetyl-CoA carboxylase is a heterohexamer composed of biotin carboxyl carrier protein (AccB), biotin carboxylase (AccC) and two subunits each of ACCase subunit alpha (AccA) and ACCase subunit beta (AccD).

It is found in the cytoplasm. The catalysed reaction is N(6)-carboxybiotinyl-L-lysyl-[protein] + acetyl-CoA = N(6)-biotinyl-L-lysyl-[protein] + malonyl-CoA. It participates in lipid metabolism; malonyl-CoA biosynthesis; malonyl-CoA from acetyl-CoA: step 1/1. In terms of biological role, component of the acetyl coenzyme A carboxylase (ACC) complex. Biotin carboxylase (BC) catalyzes the carboxylation of biotin on its carrier protein (BCCP) and then the CO(2) group is transferred by the transcarboxylase to acetyl-CoA to form malonyl-CoA. This is Acetyl-coenzyme A carboxylase carboxyl transferase subunit beta from Bartonella henselae (strain ATCC 49882 / DSM 28221 / CCUG 30454 / Houston 1) (Rochalimaea henselae).